Here is a 916-residue protein sequence, read N- to C-terminus: Translation initiation factor IF-2 (916 aa).

Positions 1 to 325 (MTDSNDDKTL…QEKFRRSQVQ (325 aa)) are disordered. Low complexity predominate over residues 60–91 (ITPATPAAPVRAAEPAPAPAQARPQQSTPAPR). Residues 97-108 (GQANQRPQQSYQ) are compositionally biased toward polar residues. Positions 125–182 (SPEEMDARRRALAESQARDAQDAIRRAEEEKRRAAEEAVRKAAEAEEAARRAVEEAAR) are enriched in basic and acidic residues. Composition is skewed to low complexity over residues 183–209 (QAEAAAAAAAEPAVTAPAPAPVTAEAR) and 229–243 (DGAAARPAPGAPAAV). The region spanning 414–581 (SRPPVVTIMG…AVLLQAEILD (168 aa)) is the tr-type G domain. The interval 423–430 (GHVDHGKT) is G1. GTP is bound at residue 423 to 430 (GHVDHGKT). The segment at 448–452 (GITQH) is G2. A G3 region spans residues 469–472 (DTPG). Residues 469 to 473 (DTPGH) and 523 to 526 (NKID) contribute to the GTP site. A G4 region spans residues 523-526 (NKID). Positions 559-561 (SAK) are G5.

It belongs to the TRAFAC class translation factor GTPase superfamily. Classic translation factor GTPase family. IF-2 subfamily.

Its subcellular location is the cytoplasm. One of the essential components for the initiation of protein synthesis. Protects formylmethionyl-tRNA from spontaneous hydrolysis and promotes its binding to the 30S ribosomal subunits. Also involved in the hydrolysis of GTP during the formation of the 70S ribosomal complex. The chain is Translation initiation factor IF-2 from Rhizobium etli (strain ATCC 51251 / DSM 11541 / JCM 21823 / NBRC 15573 / CFN 42).